Consider the following 461-residue polypeptide: 23S rRNA (uracil(1939)-C(5))-methyltransferase RlmD (461 aa).

The disordered stretch occupies residues 1-26; sequence MAKHERGLRFQPTGGSKAPQIPTGKK. Residues 20 to 78 enclose the TRAM domain; that stretch reads QIPTGKKQRLSIERLANDGRGIAFFEGKTWFVLGALAGEEVEARVLGAHGKVVEARTER. [4Fe-4S] cluster contacts are provided by Cys-91, Cys-97, Cys-100, and Cys-179. S-adenosyl-L-methionine is bound by residues Gln-283, Phe-312, Asn-317, Glu-333, Asp-360, and Asp-381. Cys-407 functions as the Nucleophile in the catalytic mechanism.

Belongs to the class I-like SAM-binding methyltransferase superfamily. RNA M5U methyltransferase family. RlmD subfamily.

It carries out the reaction uridine(1939) in 23S rRNA + S-adenosyl-L-methionine = 5-methyluridine(1939) in 23S rRNA + S-adenosyl-L-homocysteine + H(+). Catalyzes the formation of 5-methyl-uridine at position 1939 (m5U1939) in 23S rRNA. The sequence is that of 23S rRNA (uracil(1939)-C(5))-methyltransferase RlmD from Pseudomonas fluorescens (strain Pf0-1).